The primary structure comprises 89 residues: Small ribosomal subunit protein uS14 (89 aa).

Cysteine 52, cysteine 55, cysteine 68, and cysteine 71 together coordinate Zn(2+).

It belongs to the universal ribosomal protein uS14 family. As to quaternary structure, part of the 30S ribosomal subunit. Contacts proteins S3 and S10. Zn(2+) is required as a cofactor.

In terms of biological role, binds 16S rRNA, required for the assembly of 30S particles and may also be responsible for determining the conformation of the 16S rRNA at the A site. The polypeptide is Small ribosomal subunit protein uS14 (rpsN) (Salinibacter ruber (strain DSM 13855 / M31)).